The following is a 252-amino-acid chain: Aspartate/glutamate leucyltransferase (252 aa).

Belongs to the R-transferase family. Bpt subfamily.

The protein resides in the cytoplasm. It carries out the reaction N-terminal L-glutamyl-[protein] + L-leucyl-tRNA(Leu) = N-terminal L-leucyl-L-glutamyl-[protein] + tRNA(Leu) + H(+). It catalyses the reaction N-terminal L-aspartyl-[protein] + L-leucyl-tRNA(Leu) = N-terminal L-leucyl-L-aspartyl-[protein] + tRNA(Leu) + H(+). Functions in the N-end rule pathway of protein degradation where it conjugates Leu from its aminoacyl-tRNA to the N-termini of proteins containing an N-terminal aspartate or glutamate. The sequence is that of Aspartate/glutamate leucyltransferase from Xanthomonas campestris pv. campestris (strain B100).